Reading from the N-terminus, the 201-residue chain is MELVLKDAQSALTVSETTFGRDFNEALVHQVVVAYAAGARQGTRAQKTRAEVTGSGKKPWRQKGTGRARSGSIKSPIWRSGGVTFAARPQDHSQKVNKKMYRGALKSILSELVRQDRLIVVEKFSVEAPKTKLLAQKLKDMALEDVLIITGELDENLFLAARNLHKVDVRDATGIDPVSLIAFDKVVMTADAVKQVEEMLA.

The disordered stretch occupies residues 44–71; that stretch reads RAQKTRAEVTGSGKKPWRQKGTGRARSG.

It belongs to the universal ribosomal protein uL4 family. As to quaternary structure, part of the 50S ribosomal subunit.

One of the primary rRNA binding proteins, this protein initially binds near the 5'-end of the 23S rRNA. It is important during the early stages of 50S assembly. It makes multiple contacts with different domains of the 23S rRNA in the assembled 50S subunit and ribosome. Functionally, forms part of the polypeptide exit tunnel. The protein is Large ribosomal subunit protein uL4 of Escherichia fergusonii (strain ATCC 35469 / DSM 13698 / CCUG 18766 / IAM 14443 / JCM 21226 / LMG 7866 / NBRC 102419 / NCTC 12128 / CDC 0568-73).